Consider the following 657-residue polypeptide: MRGCLQSVKWLTSAVRQSQSLTSSTRFPRRLFNTSTLHYAQGRKPVSELEQRIAAIPIERFRNFCIVAHVDHGKSTLSDRLLELTGTIEAGANKQVLDKLDVERERGITVKAQTCSMLYNHQGEDYLLHLVDTPGHVDFRAEVSRSYASCGGALLLVDASQGIQAQTVANFYLAFAEGLKLVPVINKVDLPSADPERALDQMKNTFELDPKSAVLVSAKTGLNVEQLLPTVIEQVPAPVGDHTKPLRMLLVDSWYSTYKGVILLVRIFDGEVRAGDQVVSFATGLKYFVGEVGIMYPGQTAQSVLRAGQVGYIYFNPAMKRSQEAKVGDTYTKVGSEKLVQPLPGFEEPKAMVFVAAYPVDASDFPHLEDSINQLTLNDRSVTLQKESSEALGAGFRLGFLGTLHCSVFEDRLRQEHGASIIITPPTVPFKVIWKDGKEEIVTNPALFPEEETLRAKVAELQEPFVLATLTFPEEYLGRVIELCESNRGEQKNLEFFTSTQVILKYELPLAQLVDDFFGKLKGSTKGYASLDYEESGWRRSNISKLQLLVNKVPVDAVSRVVHASQVQRLGRLWVSKFKEHVDRQMFEIVIQAAVGRNVVARESIKPFRKDVLQKLHASDITRRKKLLEKQKEGRKRLKAVGNVVIEHKAFQAFLAK.

Residues 1 to 39 (MRGCLQSVKWLTSAVRQSQSLTSSTRFPRRLFNTSTLHY) constitute a mitochondrion transit peptide. One can recognise a tr-type G domain in the interval 59 to 239 (ERFRNFCIVA…TVIEQVPAPV (181 aa)). Residues 68–75 (AHVDHGKS), 132–136 (DTPGH), and 186–189 (NKVD) each bind GTP.

This sequence belongs to the TRAFAC class translation factor GTPase superfamily. Classic translation factor GTPase family. LepA subfamily.

It localises to the mitochondrion inner membrane. The catalysed reaction is GTP + H2O = GDP + phosphate + H(+). In terms of biological role, promotes mitochondrial protein synthesis. May act as a fidelity factor of the translation reaction, by catalyzing a one-codon backward translocation of tRNAs on improperly translocated ribosomes. Binds to mitochondrial ribosomes in a GTP-dependent manner. This is Translation factor GUF1, mitochondrial from Blastomyces gilchristii (strain SLH14081) (Blastomyces dermatitidis).